We begin with the raw amino-acid sequence, 195 residues long: Obelin (195 aa).

Positions 1–6 are excised as a propeptide; that stretch reads MSSKYA. EF-hand domains lie at 17 to 52, 53 to 88, 110 to 145, and 146 to 181; these read RWIKRHKHMFDFLDINGNGKITLDEIVSKASDDICA, KLEATPEQTKRHQVCVEAFFRGCGMEYGKEIAFPQF, LIREWGDAVFDIFDKDGSGTITLDEWKAYGKISGIS, and PSQEDCEATFRHCDLDNSGDLDVDEMTRQHLGFWYT. Ca(2+) is bound by residues Asp30, Asn32, Asn34, Lys36, and Glu41. Ca(2+)-binding residues include Asp123, Asp125, Ser127, Thr129, Glu134, Asp159, Asp161, Ser163, Asp165, and Glu170.

This sequence belongs to the aequorin family.

Functionally, ca(2+)-dependent bioluminescence photoprotein. Displays an emission peak at 470 nm (blue light). Trace amounts of calcium ion trigger the intramolecular oxidation of the chromophore, coelenterazine into coelenteramide and CO(2) with the concomitant emission of light. The protein is Obelin of Obelia longissima (Black sea hydrozoan).